A 280-amino-acid chain; its full sequence is 4-deoxy-L-threo-5-hexosulose-uronate ketol-isomerase (280 aa).

H198, H200, E205, and H247 together coordinate Zn(2+).

Belongs to the KduI family. The cofactor is Zn(2+).

It is found in the cytoplasm. It catalyses the reaction 5-dehydro-4-deoxy-D-glucuronate = 3-deoxy-D-glycero-2,5-hexodiulosonate. In terms of biological role, isomerase involved in ulvan degradation. Ulvan is the main polysaccharide component of the Ulvales (green seaweed) cell wall. It is composed of disaccharide building blocks comprising 3-sulfated rhamnose (Rha3S) linked to D-glucuronic acid (GlcA), L-iduronic acid (IduA), or D-xylose (Xyl). Catalyzes the isomerization of 5-dehydro-4-deoxy-D-glucuronate to 3-deoxy-D-glycero-2,5-hexodiulosonate. The sequence is that of 4-deoxy-L-threo-5-hexosulose-uronate ketol-isomerase from Formosa agariphila (strain DSM 15362 / KCTC 12365 / LMG 23005 / KMM 3901 / M-2Alg 35-1).